The following is a 204-amino-acid chain: Cardiotrophin-2 (204 aa).

The first 22 residues, 1–22, serve as a signal peptide directing secretion; sequence MYCLLATPLCLLSLLLPPLSPA. The N-linked (GlcNAc...) asparagine glycan is linked to asparagine 44.

Belongs to the IL-6 superfamily. Binds to tripartite CNTF receptor complex consisting of CNTF alpha chain, LIFR and IL6ST (in vitro). Not detected in adult tissues.

The protein resides in the secreted. Functionally, increases the platelet count associated with splenomegaly. May have an important role in neuronal precursor development and maturation. This Mus musculus (Mouse) protein is Cardiotrophin-2 (Ctf2).